A 201-amino-acid polypeptide reads, in one-letter code: Large ribosomal subunit protein uL4 (201 aa).

Residues T43–G71 are disordered.

It belongs to the universal ribosomal protein uL4 family. As to quaternary structure, part of the 50S ribosomal subunit.

Its function is as follows. One of the primary rRNA binding proteins, this protein initially binds near the 5'-end of the 23S rRNA. It is important during the early stages of 50S assembly. It makes multiple contacts with different domains of the 23S rRNA in the assembled 50S subunit and ribosome. In terms of biological role, forms part of the polypeptide exit tunnel. This Psychromonas ingrahamii (strain DSM 17664 / CCUG 51855 / 37) protein is Large ribosomal subunit protein uL4.